We begin with the raw amino-acid sequence, 465 residues long: Deoxyguanosinetriphosphate triphosphohydrolase-like protein (465 aa).

Residues 1-22 form a disordered region; that stretch reads MKWDKLLNDKRRRESGVTRSKN. One can recognise an HD domain in the interval 63-252; that stretch reads RLTHSMEVST…LEVADDIAYL (190 aa).

The protein belongs to the dGTPase family. Type 3 subfamily.

The chain is Deoxyguanosinetriphosphate triphosphohydrolase-like protein from Listeria monocytogenes serovar 1/2a (strain ATCC BAA-679 / EGD-e).